We begin with the raw amino-acid sequence, 640 residues long: 1-deoxy-D-xylulose-5-phosphate synthase (640 aa).

Thiamine diphosphate contacts are provided by residues histidine 77 and 118 to 120 (AHA). Aspartate 149 contacts Mg(2+). Thiamine diphosphate-binding positions include 150-151 (GS), asparagine 178, tyrosine 287, and glutamate 369. A Mg(2+)-binding site is contributed by asparagine 178.

It belongs to the transketolase family. DXPS subfamily. As to quaternary structure, homodimer. The cofactor is Mg(2+). Thiamine diphosphate serves as cofactor.

It catalyses the reaction D-glyceraldehyde 3-phosphate + pyruvate + H(+) = 1-deoxy-D-xylulose 5-phosphate + CO2. It participates in metabolic intermediate biosynthesis; 1-deoxy-D-xylulose 5-phosphate biosynthesis; 1-deoxy-D-xylulose 5-phosphate from D-glyceraldehyde 3-phosphate and pyruvate: step 1/1. Its function is as follows. Catalyzes the acyloin condensation reaction between C atoms 2 and 3 of pyruvate and glyceraldehyde 3-phosphate to yield 1-deoxy-D-xylulose-5-phosphate (DXP). The polypeptide is 1-deoxy-D-xylulose-5-phosphate synthase (Caulobacter vibrioides (strain NA1000 / CB15N) (Caulobacter crescentus)).